The chain runs to 155 residues: Egg-lysin (155 aa).

An N-terminal signal peptide occupies residues Met1–Ser18.

As to quaternary structure, monomer. Homodimer. Molecules associate into dimers and then rapidly dissociate again. Interacts (as a monomer) with the egg vitelline layer protein VERL (via VERL repeats); each VERL chain can bind multiple copies of lysin. As to expression, sperm (at protein level).

The protein localises to the cytoplasmic vesicle. The protein resides in the secretory vesicle. Its subcellular location is the acrosome lumen. In terms of biological role, creates a 3 um hole in the egg vitelline layer through which the sperm passes. Does not have enzyme activity. Species-specific interaction between the sperm protein lysin and the egg protein VERL exposes a basic surface on lysin that may dissociate the egg vitelline layer via electrostatic repulsion. Plays a role in ensuring species-specific fertilization. The protein is Egg-lysin of Haliotis corrugata (Pink abalone).